The primary structure comprises 208 residues: Large ribosomal subunit protein uL3 (208 aa).

Glutamine 149 is modified (N5-methylglutamine).

Belongs to the universal ribosomal protein uL3 family. As to quaternary structure, part of the 50S ribosomal subunit. Forms a cluster with proteins L14 and L19. Post-translationally, methylated by PrmB.

Its function is as follows. One of the primary rRNA binding proteins, it binds directly near the 3'-end of the 23S rRNA, where it nucleates assembly of the 50S subunit. The polypeptide is Large ribosomal subunit protein uL3 (Actinobacillus succinogenes (strain ATCC 55618 / DSM 22257 / CCUG 43843 / 130Z)).